A 175-amino-acid polypeptide reads, in one-letter code: MANEIIIVEGKSDSQKLKKIYGENLITFETNGLGIDDKKLNSIKELSKKNKIIIFTDPDGPGKKIRETIIEFLDVDVFNAFVSKQDIDKNSKKIGLAEASEEAIKKALDNLITYNKKNISISWDEYVKNDFYIKANRIIIANHFNLSEDMSSKSLFKWLNWMNLKVKDIEKIIGE.

Residues 3 to 83 (NEIIIVEGKS…DVDVFNAFVS (81 aa)) enclose the Toprim domain. Mg(2+) is bound by residues Glu9, Asp57, and Asp59.

Belongs to the ribonuclease M5 family. The cofactor is Mg(2+).

It localises to the cytoplasm. It carries out the reaction Endonucleolytic cleavage of RNA, removing 21 and 42 nucleotides, respectively, from the 5'- and 3'-termini of a 5S-rRNA precursor.. In terms of biological role, required for correct processing of both the 5' and 3' ends of 5S rRNA precursor. Cleaves both sides of a double-stranded region yielding mature 5S rRNA in one step. In Mesoplasma florum (strain ATCC 33453 / NBRC 100688 / NCTC 11704 / L1) (Acholeplasma florum), this protein is Ribonuclease M5.